Consider the following 1481-residue polypeptide: Cystic fibrosis transmembrane conductance regulator (1481 aa).

The Cytoplasmic portion of the chain corresponds to 1–77; that stretch reads MQRSPLEKAS…KLINALRRCF (77 aa). Residues 78 to 98 form a helical membrane-spanning segment; the sequence is FWRFMFYGIILYLGEVTKAVQ. Residues 81–365 form the ABC transmembrane type-1 1 domain; the sequence is FMFYGIILYL…WAVQTWYDSL (285 aa). The Extracellular segment spans residues 99–122; the sequence is PLLLGRIIASYDPDNKVERSIAIY. The helical transmembrane segment at 123–146 threads the bilayer; sequence LGIGLCLLFIVRTLLLHPAIFGLH. Over 147–195 the chain is Cytoplasmic; sequence HIGMQMRIAMFSLIYKKTLKLSSRVLDKISIGQLVSLLSNNLNKFDEGL. The helical transmembrane segment at 196–216 threads the bilayer; that stretch reads ALAHFVWIAPLQVTLLMGLLW. Residues 217–222 lie on the Extracellular side of the membrane; that stretch reads ELLQAF. Residues 223–243 traverse the membrane as a helical segment; the sequence is TFCGLAFLVVLAFLQAGLGKM. Residues 244-298 lie on the Cytoplasmic side of the membrane; that stretch reads MMKYRDQRAGKINERLVITSEIIENIQSVKAYCWEEAMEKIIENLRQTELKLTRK. Residues 299 to 319 traverse the membrane as a helical segment; the sequence is AAYVRYLNSSAFFFSGFFVVF. Residues 320-339 are Extracellular-facing; it reads LSVLPYALLKGIILRKIFTT. The helical transmembrane segment at 340 to 358 threads the bilayer; the sequence is ISFCIVLRMAVTRQFPWAV. Residues 359 to 858 are Cytoplasmic-facing; that stretch reads QTWYDSLGAI…YLRYITVHKS (500 aa). ATP-binding positions include tryptophan 401, 457–464, and glutamine 492; that span reads GSTGAGKT. Residues 423-645 enclose the ABC transporter 1 domain; that stretch reads NGDNNLFFSN…RPDFSSKLMG (223 aa). The S-palmitoyl cysteine moiety is linked to residue cysteine 523. A phosphoserine mark is found at serine 548 and serine 659. Residues 653-831 form a disordered R region region; it reads TAERRNSIIT…EEINEEDLRD (179 aa). A Phosphoserine; by PKA modification is found at serine 669. At serine 685 the chain carries Phosphoserine. A Glycyl lysine isopeptide (Lys-Gly) (interchain with G-Cter in ubiquitin) cross-link involves residue lysine 687. Serine 699 and serine 711 each carry phosphoserine. Position 716 is a phosphothreonine (threonine 716). Residues serine 736, serine 767, serine 790, serine 795, and serine 813 each carry the phosphoserine modification. Residues 859–879 form a helical membrane-spanning segment; it reads LMFVLIWCLVVFLAEVAASLV. The region spanning 859–1155 is the ABC transmembrane type-1 2 domain; that stretch reads LMFVLIWCLV…AVNSSIDVDS (297 aa). Residues 880 to 918 lie on the Extracellular side of the membrane; sequence VLCLFPKILFQDKGNSTKSANNSYAVIITSTSSYYIFYI. 2 N-linked (GlcNAc...) asparagine glycosylation sites follow: asparagine 894 and asparagine 900. The chain crosses the membrane as a discontinuously helical span at residues 919–939; it reads YVGVADTLLALGLFRGLPLVH. Topologically, residues 940-990 are cytoplasmic; it reads TLITVSKTLHHKMLQSVLQAPMSTLNTLKTGGILNRFSKDIAVLDDLLPLT. Residues 991–1011 traverse the membrane as a helical segment; that stretch reads IFDFVQLLLIVIGAVVVVSVL. Topologically, residues 1012–1013 are extracellular; the sequence is QP. A helical transmembrane segment spans residues 1014-1034; the sequence is YIFLATVPVIAAFILLRAYFL. The Cytoplasmic segment spans residues 1035–1095; the sequence is HTSQQLKQLE…TANWFLYLST (61 aa). Residues 1096 to 1116 traverse the membrane as a helical segment; that stretch reads LRWFQMRIEMIFVIFFIAVTF. Residues 1117–1130 are Extracellular-facing; that stretch reads ISILTTGEGEGRVG. A helical transmembrane segment spans residues 1131-1151; it reads IILTLAMNIMGTLQWAVNSSI. Over 1152–1481 the chain is Cytoplasmic; that stretch reads DVDSLMRSVS…TEEEVQETKL (330 aa). In terms of domain architecture, ABC transporter 2 spans 1211-1444; it reads MTVKDLTAKY…KSLFRQAISP (234 aa). Residues tyrosine 1220 and 1245 to 1252 contribute to the ATP site; that span reads GRTGSGKS. The interval 1387–1481 is interaction with GORASP2; that stretch reads RTLKQAFADC…TEEEVQETKL (95 aa). Cysteine 1396 carries S-palmitoyl cysteine lipidation. Residues 1452–1481 form a disordered region; it reads PQRNSSRQKSRSNIAALKEETEEEVQETKL. Low complexity predominate over residues 1453–1464; sequence QRNSSRQKSRSN. Residue serine 1457 is modified to Phosphoserine. Positions 1471 to 1481 are enriched in acidic residues; sequence ETEEEVQETKL. A PDZ-binding motif is present at residues 1479 to 1481; it reads TKL.

This sequence belongs to the ABC transporter superfamily. ABCC family. CFTR transporter (TC 3.A.1.202) subfamily. As to quaternary structure, monomer; does not require oligomerization for channel activity. May form oligomers in the membrane. Interacts with SLC26A3, SLC26A6 and NHERF1. Interacts with SHANK2. Interacts with MYO6. Interacts (via C-terminus) with GOPC (via PDZ domain); this promotes CFTR internalization and thereby decreases channel activity. Interacts with SLC4A7 through NHERF1. Found in a complex with MYO5B and RAB11A. Interacts with ANO1. Interacts with SLC26A8. Interacts with AHCYL1; the interaction increases CFTR activity. Interacts with CSE1L. The core-glycosylated form interacts with GORASP2 (via PDZ GRASP-type 1 domain) in respone to ER stress. Interacts with MARCHF2; the interaction leads to CFTR ubiqtuitination and degradation. Interacts with ADGRG2. Post-translationally, N-glycosylated. Phosphorylated; cAMP treatment promotes phosphorylation and activates the channel. Dephosphorylation decreases the ATPase activity (in vitro). Phosphorylation at PKA sites activates the channel. Phosphorylation at PKC sites enhances the response to phosphorylation by PKA. Phosphorylated by AMPK; this inhibits channel activity. In terms of processing, ubiquitinated, leading to its degradation in the lysosome. Deubiquitination by USP10 in early endosomes enhances its endocytic recycling to the cell membrane. Ubiquitinated by RNF185 during ER stress. Ubiquitinated by MARCHF2.

It is found in the apical cell membrane. The protein resides in the early endosome membrane. It localises to the cell membrane. Its subcellular location is the recycling endosome membrane. The protein localises to the endoplasmic reticulum membrane. It is found in the nucleus. The enzyme catalyses ATP + H2O + closed Cl(-) channel = ADP + phosphate + open Cl(-) channel.. It carries out the reaction chloride(in) = chloride(out). It catalyses the reaction hydrogencarbonate(in) = hydrogencarbonate(out). The catalysed reaction is ATP + H2O = ADP + phosphate + H(+). Its function is as follows. Epithelial ion channel that plays an important role in the regulation of epithelial ion and water transport and fluid homeostasis. Mediates the transport of chloride ions across the cell membrane. Possesses an intrinsic ATPase activity and utilizes ATP to gate its channel; the passive flow of anions through the channel is gated by cycles of ATP binding and hydrolysis by the ATP-binding domains. The ion channel is also permeable to HCO(3)(-); selectivity depends on the extracellular chloride concentration. Exerts its function also by modulating the activity of other ion channels and transporters. Contributes to the regulation of the pH and the ion content of the epithelial fluid layer. Modulates the activity of the epithelial sodium channel (ENaC) complex, in part by regulating the cell surface expression of the ENaC complex. May regulate bicarbonate secretion and salvage in epithelial cells by regulating the transporter SLC4A7. Can inhibit the chloride channel activity of ANO1. Plays a role in the chloride and bicarbonate homeostasis during sperm epididymal maturation and capacitation. The sequence is that of Cystic fibrosis transmembrane conductance regulator from Muntiacus muntjak (Barking deer).